The primary structure comprises 834 residues: Periplasmic nitrate reductase (834 aa).

The segment at residues 1-32 is a signal peptide (tat-type signal); it reads MTEPKIDRRQLLKLEAAAIAAAAAGMPTVARA. A 4Fe-4S Mo/W bis-MGD-type domain is found at 44–100; sequence LKWDKAACRFCGTGCSVMVATKDNRVVATHGDIKAEVNRGLNCVKGYFLSKIMYGHD. Residues Cys51, Cys54, Cys58, and Cys86 each contribute to the [4Fe-4S] cluster site. Residues Lys88, Gln155, Asn180, Cys184, 217–224, 248–252, 267–269, Met378, Gln382, Asn488, 514–515, Lys537, Asp564, and 724–733 each bind Mo-bis(molybdopterin guanine dinucleotide); these read WGSNMAEM, STFEH, QTD, SD, and TGRVVEHWHS. Trp800 contributes to the substrate binding site. Mo-bis(molybdopterin guanine dinucleotide)-binding residues include Asn808 and Lys825.

It belongs to the prokaryotic molybdopterin-containing oxidoreductase family. NasA/NapA/NarB subfamily. As to quaternary structure, component of the periplasmic nitrate reductase NapAB complex composed of NapA and NapB. It depends on [4Fe-4S] cluster as a cofactor. Mo-bis(molybdopterin guanine dinucleotide) serves as cofactor. In terms of processing, predicted to be exported by the Tat system. The position of the signal peptide cleavage has not been experimentally proven.

It is found in the periplasm. The enzyme catalyses 2 Fe(II)-[cytochrome] + nitrate + 2 H(+) = 2 Fe(III)-[cytochrome] + nitrite + H2O. Functionally, catalytic subunit of the periplasmic nitrate reductase complex NapAB. Receives electrons from NapB and catalyzes the reduction of nitrate to nitrite. The chain is Periplasmic nitrate reductase from Bradyrhizobium sp. (strain ORS 278).